Here is a 196-residue protein sequence, read N- to C-terminus: Nodulation protein A (196 aa).

The protein belongs to the NodA family.

Its subcellular location is the cytoplasm. Its function is as follows. N-acyltransferase required for nodulation. Acts in the production of a small, heat-stable compound (Nod) that stimulates mitosis in various plant protoplasts. In Mesorhizobium sp. (strain 7653R), this protein is Nodulation protein A.